Consider the following 256-residue polypeptide: 3-dehydroquinate dehydratase (256 aa).

3-dehydroquinate contacts are provided by residues 46-48 and R82; that span reads EWR. The active-site Proton donor/acceptor is H144. K171 (schiff-base intermediate with substrate) is an active-site residue. 3-dehydroquinate is bound by residues R213, S232, and Q236.

It belongs to the type-I 3-dehydroquinase family. In terms of assembly, homodimer.

The enzyme catalyses 3-dehydroquinate = 3-dehydroshikimate + H2O. It functions in the pathway metabolic intermediate biosynthesis; chorismate biosynthesis; chorismate from D-erythrose 4-phosphate and phosphoenolpyruvate: step 3/7. In terms of biological role, involved in the third step of the chorismate pathway, which leads to the biosynthesis of aromatic amino acids. Catalyzes the cis-dehydration of 3-dehydroquinate (DHQ) and introduces the first double bond of the aromatic ring to yield 3-dehydroshikimate. This chain is 3-dehydroquinate dehydratase, found in Shouchella clausii (strain KSM-K16) (Alkalihalobacillus clausii).